Consider the following 182-residue polypeptide: ATP synthase subunit delta (182 aa).

It belongs to the ATPase delta chain family. F-type ATPases have 2 components, F(1) - the catalytic core - and F(0) - the membrane proton channel. F(1) has five subunits: alpha(3), beta(3), gamma(1), delta(1), epsilon(1). CF(0) has four main subunits: a(1), b(1), b'(1) and c(10-14). The alpha and beta chains form an alternating ring which encloses part of the gamma chain. F(1) is attached to F(0) by a central stalk formed by the gamma and epsilon chains, while a peripheral stalk is formed by the delta, b and b' chains.

It localises to the cellular thylakoid membrane. Its function is as follows. F(1)F(0) ATP synthase produces ATP from ADP in the presence of a proton or sodium gradient. F-type ATPases consist of two structural domains, F(1) containing the extramembraneous catalytic core and F(0) containing the membrane proton channel, linked together by a central stalk and a peripheral stalk. During catalysis, ATP synthesis in the catalytic domain of F(1) is coupled via a rotary mechanism of the central stalk subunits to proton translocation. Functionally, this protein is part of the stalk that links CF(0) to CF(1). It either transmits conformational changes from CF(0) to CF(1) or is implicated in proton conduction. In Synechococcus sp. (strain CC9902), this protein is ATP synthase subunit delta.